Reading from the N-terminus, the 286-residue chain is Probable aquaporin PIP2-5 (286 aa).

An N-acetylmethionine modification is found at M1. Positions 1–18 (MTKEVVGDKRSFSGKDYQ) are enriched in basic and acidic residues. The tract at residues 1 to 23 (MTKEVVGDKRSFSGKDYQDPPPE) is disordered. Residues 1–38 (MTKEVVGDKRSFSGKDYQDPPPEPLFDATELGKWSFYR) lie on the Cytoplasmic side of the membrane. At K3 the chain carries N6,N6-dimethyllysine. Residues 39–59 (ALIAEFIATLLFLYVTIMTVI) traverse the membrane as a helical segment. Topologically, residues 60 to 75 (GYKSQTDPALNPDQCT) are extracellular. The chain crosses the membrane as a helical span at residues 76 to 96 (GVGVLGIAWAFGGMIFILVYC). Topologically, residues 97 to 124 (TAGISGGHINPAVTFGLLLARKVTLVRA) are cytoplasmic. The short motif at 106–108 (NPA) is the NPA 1 element. A helical transmembrane segment spans residues 125–145 (VMYMVAQCLGAICGVALVKAF). Over 146-165 (QSAYFTRYGGGANGLSDGYS) the chain is Extracellular. A helical membrane pass occupies residues 166-186 (IGTGVAAEIIGTFVLVYTVFS). The Cytoplasmic portion of the chain corresponds to 187 to 200 (ATDPKRSARDSHVP). Residues 201-221 (VLAPLPIGFAVFIVHLATIPI) form a helical membrane-spanning segment. Topologically, residues 222-248 (TGTGINPARSLGAAIIYNKDKAWDHHW) are extracellular. The NPA 2 motif lies at 227–229 (NPA). Residues 249-269 (IFWVGPFAGAAIAAFYHQFVL) traverse the membrane as a helical segment. Topologically, residues 270–286 (RAGAIKALGSFRSQPHV) are cytoplasmic. Residues S279 and S282 each carry the phosphoserine modification.

It belongs to the MIP/aquaporin (TC 1.A.8) family. PIP (TC 1.A.8.11) subfamily. As to expression, expressed in green siliques.

It localises to the cell membrane. Its function is as follows. Aquaporins facilitate the transport of water and small neutral solutes across cell membranes. The chain is Probable aquaporin PIP2-5 (PIP2-5) from Arabidopsis thaliana (Mouse-ear cress).